The sequence spans 122 residues: Large ribosomal subunit protein bL12 (122 aa).

Belongs to the bacterial ribosomal protein bL12 family. Homodimer. Part of the ribosomal stalk of the 50S ribosomal subunit. Forms a multimeric L10(L12)X complex, where L10 forms an elongated spine to which 2 to 4 L12 dimers bind in a sequential fashion. Binds GTP-bound translation factors.

In terms of biological role, forms part of the ribosomal stalk which helps the ribosome interact with GTP-bound translation factors. Is thus essential for accurate translation. This Clostridium botulinum (strain Langeland / NCTC 10281 / Type F) protein is Large ribosomal subunit protein bL12.